The chain runs to 560 residues: Dimethylaniline monooxygenase [N-oxide-forming] 4 (560 aa).

FAD is bound by residues 9–13 (GAGVS), Glu32, and 40–41 (LW). NADP(+)-binding positions include 60-61 (TN) and 195-198 (TGGD). Residues 519-539 (APVLIVSLLLIYKSSLFLELV) form a helical membrane-spanning segment.

It belongs to the FMO family. It depends on FAD as a cofactor. As to expression, detected in liver and kidney (at protein level).

It is found in the microsome membrane. It localises to the endoplasmic reticulum membrane. The catalysed reaction is N,N-dimethylaniline + NADPH + O2 + H(+) = N,N-dimethylaniline N-oxide + NADP(+) + H2O. Functionally, this protein is involved in the oxidative metabolism of a variety of xenobiotics such as drugs and pesticides. The chain is Dimethylaniline monooxygenase [N-oxide-forming] 4 (Fmo4) from Rattus norvegicus (Rat).